The chain runs to 117 residues: Ig heavy chain V region 3 (117 aa).

Positions M1 to S19 are cleaved as a signal peptide. A framework-1 region spans residues Q20–T49. C41 and C115 are oxidised to a cystine. The interval S50–D54 is complementarity-determining-1. Positions W55–G68 are framework-2. A complementarity-determining-2 region spans residues N69–D85. Residues K86–R117 form a framework-3 region.

The chain is Ig heavy chain V region 3 (Ighv1-61) from Mus musculus (Mouse).